We begin with the raw amino-acid sequence, 460 residues long: Proton extrusion protein PxcA (460 aa).

The interval 84-194 (RLPDPEQNGS…KTNLDNSNAP (111 aa)) is disordered. Basic and acidic residues predominate over residues 114–136 (NDGKDAENGRQSRDPSILEKLEF). Polar residues predominate over residues 167–194 (LTSSQPEPSDPSIKTNLAKTNLDNSNAP). 4 helical membrane-spanning segments follow: residues 242 to 262 (FLLL…HFLF), 337 to 357 (GLKN…LILI), 373 to 393 (IYGL…DVFV), and 420 to 440 (FIYG…KYWI).

Belongs to the CemA family.

It is found in the cell inner membrane. Its function is as follows. Required for H(+) efflux immediately after light irradiation to form a rapid H(+) concentration gradient across the thylakoid membranes. Together with PxcL, contributes to transient H(+) uptake following dark to light transition. In Synechococcus sp. (strain JA-3-3Ab) (Cyanobacteria bacterium Yellowstone A-Prime), this protein is Proton extrusion protein PxcA.